The primary structure comprises 1265 residues: 1-phosphatidylinositol 4,5-bisphosphate phosphodiesterase gamma-2 (1265 aa).

The 112-residue stretch at 20–131 folds into the PH domain; that stretch reads RALELGTVMT…WLSGLKILHQ (112 aa). Residues 312–456 enclose the PI-PLC X-box domain; the sequence is QDMNNPLSHY…LREKIIIKHK (145 aa). Catalysis depends on residues H327 and H372. SH2 domains follow at residues 532–635 and 646–735; these read WFHK…TDPV and WYYD…RYPV. Phosphotyrosine; by BTK is present on residues Y753 and Y759. Residues 769–829 form the SH3 domain; sequence MPQRTVKALY…PSNYVEDIST (61 aa). The PI-PLC Y-box domain maps to 930–1044; it reads LSDLVVYCKP…GYVLQPESMR (115 aa). The region spanning 1038–1169 is the C2 domain; it reads LQPESMRTEK…SGFRSVPLKN (132 aa). Y1197 is subject to Phosphotyrosine; by BTK. Phosphotyrosine occurs at positions 1217 and 1245.

Part of a complex composed of EEIG1, TNFRSF11A/RANK, PLCG2, GAB2, TEC and BTK; complex formation increases in the presence of TNFSF11/RANKL. Interacts (via SH2 domain) with CSF1R (tyrosine phosphorylated). Interacts constitutively with THEMIS2. Ca(2+) is required as a cofactor. Phosphorylated on tyrosine residues by CSF1R. Phosphorylated on tyrosine residues by BTK and SYK; upon ligand-induced activation of a variety of growth factor receptors and immune system receptors. Phosphorylation leads to increased phospholipase activity.

Its subcellular location is the membrane raft. The catalysed reaction is a 1,2-diacyl-sn-glycero-3-phospho-(1D-myo-inositol-4,5-bisphosphate) + H2O = 1D-myo-inositol 1,4,5-trisphosphate + a 1,2-diacyl-sn-glycerol + H(+). Its function is as follows. The production of the second messenger molecules diacylglycerol (DAG) and inositol 1,4,5-trisphosphate (IP3) is mediated by activated phosphatidylinositol-specific phospholipase C enzymes. It is a crucial enzyme in transmembrane signaling. The sequence is that of 1-phosphatidylinositol 4,5-bisphosphate phosphodiesterase gamma-2 from Homo sapiens (Human).